We begin with the raw amino-acid sequence, 268 residues long: Tryptophan synthase alpha chain (268 aa).

Residues Glu49 and Asp60 each act as proton acceptor in the active site.

This sequence belongs to the TrpA family. In terms of assembly, tetramer of two alpha and two beta chains.

It carries out the reaction (1S,2R)-1-C-(indol-3-yl)glycerol 3-phosphate + L-serine = D-glyceraldehyde 3-phosphate + L-tryptophan + H2O. Its pathway is amino-acid biosynthesis; L-tryptophan biosynthesis; L-tryptophan from chorismate: step 5/5. Its function is as follows. The alpha subunit is responsible for the aldol cleavage of indoleglycerol phosphate to indole and glyceraldehyde 3-phosphate. The chain is Tryptophan synthase alpha chain from Xanthomonas oryzae pv. oryzae (strain PXO99A).